Reading from the N-terminus, the 319-residue chain is uncharacterized protein (319 aa).

Residues 21-70 (ETETLKNSTDEVQTSSSFSSSGGRQSSPLTSGSKLEREKQTPSLEQGDTQ) form a disordered region. Residues 25–34 (LKNSTDEVQT) are compositionally biased toward polar residues. Residues 35–51 (SSSFSSSGGRQSSPLTS) are compositionally biased toward low complexity. Polar residues predominate over residues 61-70 (TPSLEQGDTQ).

This is an uncharacterized protein from Homo sapiens (Human).